The primary structure comprises 256 residues: H-2 class II histocompatibility antigen, A-D alpha chain (256 aa).

A signal peptide spans Met-1–Gly-23. The alpha-1 stretch occupies residues Glu-24–Asn-111. Topologically, residues Glu-24–Glu-218 are extracellular. The interval Glu-112–Trp-205 is alpha-2. The Ig-like C1-type domain maps to Pro-114 to Glu-206. A disulfide bridge connects residues Cys-134 and Cys-190. N-linked (GlcNAc...) asparagine glycosylation is present at Asn-145. The connecting peptide stretch occupies residues Glu-206–Glu-218. Residues Thr-219–Leu-244 form a helical membrane-spanning segment. Topologically, residues Arg-245 to Leu-256 are cytoplasmic.

Belongs to the MHC class II family.

It localises to the membrane. This chain is H-2 class II histocompatibility antigen, A-D alpha chain (H2-Aa), found in Mus musculus (Mouse).